The chain runs to 113 residues: Protein suex-1 (113 aa).

An N-terminal signal peptide occupies residues 1–22 (MQSLLVFCLATIILSNFTEASA).

The chain is Protein suex-1 from Caenorhabditis elegans.